The sequence spans 253 residues: Probable transcriptional regulatory protein syc0529_d (253 aa).

The protein belongs to the TACO1 family.

Its subcellular location is the cytoplasm. This is Probable transcriptional regulatory protein syc0529_d from Synechococcus sp. (strain ATCC 27144 / PCC 6301 / SAUG 1402/1) (Anacystis nidulans).